The chain runs to 897 residues: Molybdenum import ATP-binding protein ModC 2 (897 aa).

The ABC transporter domain occupies 6 to 236 (RGRIDAAFRG…PALPLAYSRD (231 aa)). 38–45 (GPSGCGKT) provides a ligand contact to ATP. A Mop domain is found at 295-365 (ESSILNILPA…VKGVSLVRAS (71 aa)). The segment at 823–848 (LGDRSVLGPREPDAGAKGRKRQNDPE) is disordered. Basic and acidic residues predominate over residues 832–848 (REPDAGAKGRKRQNDPE).

It belongs to the ABC transporter superfamily. Molybdate importer (TC 3.A.1.8) family. As to quaternary structure, the complex is composed of two ATP-binding proteins (ModC), two transmembrane proteins (ModB) and a solute-binding protein (ModA).

The protein localises to the cell inner membrane. The catalysed reaction is molybdate(out) + ATP + H2O = molybdate(in) + ADP + phosphate + H(+). In terms of biological role, part of the ABC transporter complex ModABC involved in molybdenum import. Responsible for energy coupling to the transport system. This is Molybdenum import ATP-binding protein ModC 2 from Bradyrhizobium diazoefficiens (strain JCM 10833 / BCRC 13528 / IAM 13628 / NBRC 14792 / USDA 110).